We begin with the raw amino-acid sequence, 317 residues long: Melanocyte-stimulating hormone receptor (317 aa).

At 1–37 the chain is on the extracellular side; it reads MPMQGAQRRLLGSLNSTPTATPNLGLAANHTGAPCLE. An N-linked (GlcNAc...) asparagine glycan is attached at Asn29. Residues 38–63 form a helical membrane-spanning segment; it reads VSIPDGLFLSLGLVSLVENVLVVAAI. Topologically, residues 64–72 are cytoplasmic; sequence AKNRNLHSP. Residues 73–93 form a helical membrane-spanning segment; that stretch reads MYCFICCLALSDLLVSGSNML. Residues 94–118 are Extracellular-facing; the sequence is EMAVILLLEAGALATRASVVQQLQN. A helical transmembrane segment spans residues 119–140; it reads TIDVLTCSSMLCSLCFLGAIAV. The Cytoplasmic portion of the chain corresponds to 141 to 163; that stretch reads DRYVSIFYALRYHSIVTLPRARR. A helical transmembrane segment spans residues 164-183; it reads AIAAIWVASVLSSTLFIAYC. The Extracellular segment spans residues 184-191; sequence DHAAVLLC. The chain crosses the membrane as a helical span at residues 192–211; that stretch reads LVVFFLAMLVLMAVLYVHML. At 212–240 the chain is on the cytoplasmic side; it reads ARACQHAQGITRLHKRQLPAHQGFGLRGA. The chain crosses the membrane as a helical span at residues 241–266; sequence ATLTILLGIFFVCWGPFFLHLMLVVL. Residues 267 to 279 lie on the Extracellular side of the membrane; it reads CPQHLTCSCIFKN. A helical membrane pass occupies residues 280-300; it reads FKVFLTLIICNTIIDPLIYAF. Residues 301 to 317 are Cytoplasmic-facing; it reads RSQELCRTLKEVLLCSW. Residue Cys315 is the site of S-palmitoyl cysteine attachment.

It belongs to the G-protein coupled receptor 1 family. In terms of assembly, interacts with MGRN1, but does not undergo MGRN1-mediated ubiquitination; this interaction competes with GNAS-binding and thus inhibits agonist-induced cAMP production. Interacts with OPN3; the interaction results in a decrease in MC1R-mediated cAMP signaling and ultimately a decrease in melanin production in melanocytes.

It is found in the cell membrane. Functionally, receptor for MSH (alpha, beta and gamma) and ACTH. The activity of this receptor is mediated by G proteins which activate adenylate cyclase. Mediates melanogenesis, the production of eumelanin (black/brown) and phaeomelanin (red/yellow), via regulation of cAMP signaling in melanocytes. In Alouatta sara (Bolivian red howler monkey), this protein is Melanocyte-stimulating hormone receptor (MC1R).